The chain runs to 381 residues: RxLR effector protein 54 (381 aa).

The first 19 residues, 1–19, serve as a signal peptide directing secretion; sequence MRFQSIMMLTITCAGTCLA. Positions 57–75 match the RxLR-dEER motif; the sequence is RFLRFDTVARDTAGNDEER. WY-domain regions lie at residues 97–150, 151–198, 199–247, 251–299, and 302–354; these read SAEE…ANNG, NQAF…SLSG, NWIR…WNKN, FFGD…LLTS, and SHKT…RDKI. The ATG8 interacting motif signature appears at 372 to 381; the sequence is KPLDFDWEIV.

The protein belongs to the RxLR effector family. Interacts via its C-terminal AIM with host ATG8CL.

It localises to the secreted. The protein localises to the host nucleus. The protein resides in the host cytoplasm. Effector that specifically binds host autophagy protein ATG8CL of the ATG8 family to stimulate autophagosome formation and subsequent autophagy rather than blocking autophagic flux. The pathogen remodels host-microbe interface by co-opting the host autophagy machinery which plays a key role in plant immunity. PexRD54 competes with the autophagy cargo receptor Joka2 to deplete it out of ATG8CL complexes and interferes with Joka2's positive effect on pathogen defense. In Phytophthora infestans (strain T30-4) (Potato late blight agent), this protein is RxLR effector protein 54.